The sequence spans 376 residues: Succinyl-diaminopimelate desuccinylase (376 aa).

H64 lines the Zn(2+) pocket. D66 is an active-site residue. D97 lines the Zn(2+) pocket. Catalysis depends on E131, which acts as the Proton acceptor. The Zn(2+) site is built by E132, E160, and H347.

The protein belongs to the peptidase M20A family. DapE subfamily. In terms of assembly, homodimer. Zn(2+) serves as cofactor. Requires Co(2+) as cofactor.

The enzyme catalyses N-succinyl-(2S,6S)-2,6-diaminopimelate + H2O = (2S,6S)-2,6-diaminopimelate + succinate. It participates in amino-acid biosynthesis; L-lysine biosynthesis via DAP pathway; LL-2,6-diaminopimelate from (S)-tetrahydrodipicolinate (succinylase route): step 3/3. Functionally, catalyzes the hydrolysis of N-succinyl-L,L-diaminopimelic acid (SDAP), forming succinate and LL-2,6-diaminopimelate (DAP), an intermediate involved in the bacterial biosynthesis of lysine and meso-diaminopimelic acid, an essential component of bacterial cell walls. The protein is Succinyl-diaminopimelate desuccinylase of Wigglesworthia glossinidia brevipalpis.